The sequence spans 119 residues: Ribonuclease P protein component (119 aa).

It belongs to the RnpA family. Consists of a catalytic RNA component (M1 or rnpB) and a protein subunit.

It carries out the reaction Endonucleolytic cleavage of RNA, removing 5'-extranucleotides from tRNA precursor.. RNaseP catalyzes the removal of the 5'-leader sequence from pre-tRNA to produce the mature 5'-terminus. It can also cleave other RNA substrates such as 4.5S RNA. The protein component plays an auxiliary but essential role in vivo by binding to the 5'-leader sequence and broadening the substrate specificity of the ribozyme. This is Ribonuclease P protein component from Yersinia pseudotuberculosis serotype O:1b (strain IP 31758).